The sequence spans 304 residues: Glucose-6-phosphate isomerase (304 aa).

The active-site Proton donor is Glu-146. The active site involves His-177.

It belongs to the GPI family.

It is found in the cytoplasm. It catalyses the reaction alpha-D-glucose 6-phosphate = beta-D-fructose 6-phosphate. It functions in the pathway carbohydrate degradation; glycolysis; D-glyceraldehyde 3-phosphate and glycerone phosphate from D-glucose: step 2/4. The sequence is that of Glucose-6-phosphate isomerase (PGI) from Calanus finmarchicus (Calanus tonsus).